A 462-amino-acid polypeptide reads, in one-letter code: Chromosomal replication initiator protein DnaA (462 aa).

Residues 1–83 form a domain I, interacts with DnaA modulators region; that stretch reads MSLSLWQQCL…LRFEVGSKPA (83 aa). A domain II region spans residues 83 to 125; sequence AVRAHSHPVTASVSAPVAPVTRSAPVRPSWDSSPAQPELSYRS. Residues 105–127 are disordered; that stretch reads SAPVRPSWDSSPAQPELSYRSNV. The segment covering 112–127 has biased composition (polar residues); it reads WDSSPAQPELSYRSNV. Residues 126-342 form a domain III, AAA+ region region; sequence NVNPKHTFDN…GALNRVIANA (217 aa). 4 residues coordinate ATP: glycine 170, glycine 172, lysine 173, and threonine 174. The domain IV, binds dsDNA stretch occupies residues 343–462; it reads NFTGRAITID…FSNLIRTLSS (120 aa).

Belongs to the DnaA family. As to quaternary structure, oligomerizes as a right-handed, spiral filament on DNA at oriC.

It is found in the cytoplasm. In terms of biological role, plays an essential role in the initiation and regulation of chromosomal replication. ATP-DnaA binds to the origin of replication (oriC) to initiate formation of the DNA replication initiation complex once per cell cycle. Binds the DnaA box (a 9 base pair repeat at the origin) and separates the double-stranded (ds)DNA. Forms a right-handed helical filament on oriC DNA; dsDNA binds to the exterior of the filament while single-stranded (ss)DNA is stabiized in the filament's interior. The ATP-DnaA-oriC complex binds and stabilizes one strand of the AT-rich DNA unwinding element (DUE), permitting loading of DNA polymerase. After initiation quickly degrades to an ADP-DnaA complex that is not apt for DNA replication. Binds acidic phospholipids. This chain is Chromosomal replication initiator protein DnaA, found in Yersinia enterocolitica serotype O:8 / biotype 1B (strain NCTC 13174 / 8081).